A 338-amino-acid chain; its full sequence is tRNA N6-adenosine threonylcarbamoyltransferase (338 aa).

2 residues coordinate Fe cation: His111 and His115. Substrate-binding positions include 134 to 138, Asp167, Gly180, and Asn272; that span reads LVSGG. Residue Asp300 coordinates Fe cation.

Belongs to the KAE1 / TsaD family. Requires Fe(2+) as cofactor.

Its subcellular location is the cytoplasm. The catalysed reaction is L-threonylcarbamoyladenylate + adenosine(37) in tRNA = N(6)-L-threonylcarbamoyladenosine(37) in tRNA + AMP + H(+). Its function is as follows. Required for the formation of a threonylcarbamoyl group on adenosine at position 37 (t(6)A37) in tRNAs that read codons beginning with adenine. Is involved in the transfer of the threonylcarbamoyl moiety of threonylcarbamoyl-AMP (TC-AMP) to the N6 group of A37, together with TsaE and TsaB. TsaD likely plays a direct catalytic role in this reaction. This chain is tRNA N6-adenosine threonylcarbamoyltransferase, found in Shewanella denitrificans (strain OS217 / ATCC BAA-1090 / DSM 15013).